Consider the following 37-residue polypeptide: Large ribosomal subunit protein bL36c (37 aa).

The protein belongs to the bacterial ribosomal protein bL36 family.

Its subcellular location is the plastid. The protein resides in the chloroplast. In Adiantum capillus-veneris (Maidenhair fern), this protein is Large ribosomal subunit protein bL36c.